A 1314-amino-acid polypeptide reads, in one-letter code: AT-rich interactive domain-containing protein 4B (1314 aa).

Disordered regions lie at residues 123-169 and 266-306; these read LPLT…RKQT and KTEL…EPFP. Phosphoserine occurs at positions 276, 295, and 296. Residues 277-305 are compositionally biased toward acidic residues; it reads EAEEEEEEEDDEKEKEDNSSEEEEEIEPF. Residues 306-398 form the ARID domain; sequence PEERENFLQQ…YLYGFEEYCR (93 aa). Residues Lys428 and Lys461 each participate in a glycyl lysine isopeptide (Lys-Gly) (interchain with G-Cter in SUMO2) cross-link. Over residues 439–464 the composition is skewed to basic and acidic residues; sequence NVEDSKNVMPKEETPAEDESERKENI. Disordered regions lie at residues 439–577, 635–678, 709–888, 943–1215, and 1256–1290; these read NVED…KVQV, IKHR…SPEM, ASES…EEKR, KELF…RLPK, and VASIDRRRKRLKKKERESAATSSSSSSPSSSSITA. Residue Ser482 is modified to Phosphoserine. Residues 486–511 are compositionally biased toward basic and acidic residues; it reads KEAHITKLEENENLEDKDGGRARTEE. Residues 531–567 show a composition bias toward acidic residues; it reads NKEEDEDDEEIEEEEEEDEEEDEDEDDDDNNEEEEFE. The 53-residue stretch at 572-624 folds into the Tudor-knot domain; sequence GMKVQVRYGRGKNQKMYEASIKDSDVEGGEALYLVHYCGWNVRYDEWIKADKI. A compositionally biased stretch (basic and acidic residues) spans 643 to 656; sequence NKLDKEKDRDEKYS. 4 positions are modified to phosphoserine: Ser666, Ser668, Ser675, and Ser717. Basic and acidic residues-rich tracts occupy residues 722–754 and 778–787; these read ERCTQDVDNIGKDESKVEHSTHSRNELISKEEQ and SPERLRKDME. Residue Lys751 forms a Glycyl lysine isopeptide (Lys-Gly) (interchain with G-Cter in SUMO2) linkage. Residues Ser778 and Ser790 each carry the phosphoserine modification. The span at 788–800 shows a compositional bias: acidic residues; the sequence is AISEDTDFEEEDE. Thr793 is subject to Phosphothreonine. 3 stretches are compositionally biased toward basic and acidic residues: residues 808-817, 841-853, and 997-1012; these read VKKDTTDKAL, GKKEDRTKSKEPL, and KPIEEKPLEVSDRKTE. Residues 1013-1023 show a composition bias toward polar residues; that stretch reads FPSSGSNSVLN. Ser1016 is modified (phosphoserine). Thr1028 is modified (phosphothreonine). Residues 1030 to 1051 are compositionally biased toward low complexity; that stretch reads ESPSSVTITEASQQQSSVTVSV. Residue Ser1031 is modified to Phosphoserine. Basic and acidic residues predominate over residues 1058–1067; that stretch reads EEVRSIKSET. Over residues 1089 to 1103 the composition is skewed to low complexity; sequence SSPAGFDASVSSSSS. Positions 1132-1150 are enriched in basic residues; it reads KKQKRSHKATVVNNKKKGK. Thr1152 is subject to Phosphothreonine. Residues Ser1154, Ser1155, Ser1157, and Ser1161 each carry the phosphoserine modification. Polar residues predominate over residues 1164–1186; that stretch reads ESVTKTQTIKSVPTGMKTHNSKS. The span at 1198–1210 shows a compositional bias: basic and acidic residues; it reads RNGDKDPDLKEPS. Residues 1227–1272 are a coiled coil; sequence ENMTSAERISILQEKLQEIRKHYLSLKSEVASIDRRRKRLKKKERE. Residues 1274-1290 show a composition bias toward low complexity; it reads AATSSSSSSPSSSSITA.

Component of a Sin3A corepressor complex consisting of SIN3A, SAP130, SUDS3/SAP45, SAP180, HDAC1 and HDAC2. Interacts with ARID4A. Interacts with AR. In terms of tissue distribution, expressed in Sertoli cells of the testis.

It localises to the nucleus. Functionally, acts as a transcriptional repressor. May function in the assembly and/or enzymatic activity of the Sin3A corepressor complex or in mediating interactions between the complex and other regulatory complexes. Plays a role in the regulation of epigenetic modifications at the PWS/AS imprinting center near the SNRPN promoter, where it might function as part of a complex with RB1 and ARID4A. Involved in spermatogenesis, together with ARID4A, where it functions as a transcriptional coactivator for AR (androgen receptor) and enhances expression of genes required for sperm maturation. Regulates expression of the tight junction protein CLDN3 in the testis, which is important for integrity of the blood-testis barrier. Plays a role in myeloid homeostasis where it regulates the histone methylation state of bone marrow cells and expression of various genes involved in hematopoiesis. May function as a leukemia suppressor. This Mus musculus (Mouse) protein is AT-rich interactive domain-containing protein 4B (Arid4b).